The primary structure comprises 417 residues: Queuine tRNA-ribosyltransferase accessory subunit 2 (417 aa).

4 residues coordinate Zn(2+): Cys324, Cys326, Cys329, and His355.

Belongs to the queuine tRNA-ribosyltransferase family. QTRT2 subfamily. Heterodimer of a catalytic subunit and an accessory subunit. Zn(2+) is required as a cofactor.

The protein resides in the cytoplasm. In terms of biological role, non-catalytic subunit of the queuine tRNA-ribosyltransferase (TGT) that catalyzes the base-exchange of a guanine (G) residue with queuine (Q) at position 34 (anticodon wobble position) in tRNAs with GU(N) anticodons (tRNA-Asp, -Asn, -His and -Tyr), resulting in the hypermodified nucleoside queuosine (7-(((4,5-cis-dihydroxy-2-cyclopenten-1-yl)amino)methyl)-7-deazaguanosine). This chain is Queuine tRNA-ribosyltransferase accessory subunit 2, found in Drosophila pseudoobscura pseudoobscura (Fruit fly).